Consider the following 404-residue polypeptide: Multidrug resistance protein MdtH (404 aa).

Residues 1–12 lie on the Cytoplasmic side of the membrane; that stretch reads MSRVSQARNLGK. A helical membrane pass occupies residues 13-33; sequence YFLLIDNMLVVLGFFVVFPLI. At 34–98 the chain is on the periplasmic side; sequence SIRFVDQMGW…GFATMGIAHE (65 aa). The chain crosses the membrane as a helical span at residues 99–116; it reads PWLLWFSCFLSGLGGTLF. Residues 117 to 138 lie on the Cytoplasmic side of the membrane; sequence DPPRSALVVKLIRPEQRGRFFS. Residues 139 to 159 traverse the membrane as a helical segment; the sequence is LLMMQDSAGAVIGALLGSWLL. At 160 to 164 the chain is on the periplasmic side; the sequence is QYDFR. Residues 165-185 traverse the membrane as a helical segment; sequence LVCAMGAILFIVCAIFNAWLL. At 186–213 the chain is on the cytoplasmic side; it reads PAWKLSTVRTPVREGMRRVISDKRFVTY. A helical transmembrane segment spans residues 214–234; that stretch reads VLTLAGYYMLAVQVMLMLPIM. Residues 235 to 243 lie on the Periplasmic side of the membrane; sequence VNDVAGSPA. A helical membrane pass occupies residues 244 to 264; that stretch reads AVKWMYAIEACLSLTLLYPIA. Residues 265–276 are Cytoplasmic-facing; it reads RWSEKRFRLEHR. Residues 277-297 traverse the membrane as a helical segment; that stretch reads LMAGLLIMSLSMIPIGLAGNL. Topologically, residues 298 to 299 are periplasmic; that stretch reads QQ. The chain crosses the membrane as a helical span at residues 300-320; it reads LFTLICAFYIGSVIAEPARET. The Cytoplasmic segment spans residues 321-339; sequence LSASLTDARARGSYMGFSR. A helical membrane pass occupies residues 340–360; sequence LGLAIGGAIGYIGGGWLFDMG. At 361 to 367 the chain is on the periplasmic side; the sequence is KTLAQPE. The helical transmembrane segment at 368 to 388 threads the bilayer; it reads LPWMMLGIIGFITFLALGWQF. Residues 389–404 are Cytoplasmic-facing; it reads SHKRTPRQYTGARRLI.

This sequence belongs to the major facilitator superfamily. DHA1 family. MdtH (TC 2.A.1.2.21) subfamily.

The protein resides in the cell inner membrane. This Salmonella arizonae (strain ATCC BAA-731 / CDC346-86 / RSK2980) protein is Multidrug resistance protein MdtH.